A 165-amino-acid chain; its full sequence is Large ribosomal subunit protein uL10 (165 aa).

An N6-acetyllysine mark is found at Lys37 and Lys105.

The protein belongs to the universal ribosomal protein uL10 family. In terms of assembly, part of the ribosomal stalk of the 50S ribosomal subunit. The N-terminus interacts with L11 and the large rRNA to form the base of the stalk. The C-terminus forms an elongated spine to which L12 dimers bind in a sequential fashion forming a multimeric L10(L12)X complex.

Its function is as follows. Protein L10 is also a translational repressor protein. It controls the translation of the rplJL-rpoBC operon by binding to its mRNA. In terms of biological role, forms part of the ribosomal stalk, playing a central role in the interaction of the ribosome with GTP-bound translation factors. The polypeptide is Large ribosomal subunit protein uL10 (rplJ) (Escherichia coli O6:H1 (strain CFT073 / ATCC 700928 / UPEC)).